Reading from the N-terminus, the 1394-residue chain is Adhesion and penetration protein autotransporter (1394 aa).

An N-terminal signal peptide occupies residues 1-25 (MKKTVFRLNFLTACISLGIVSQAWA). The 261-residue stretch at 26 to 286 (GHTYFGIDYQ…QLVRKSYFDE (261 aa)) folds into the Peptidase S6 domain. Ser243 is a catalytic residue. Disordered stretches follow at residues 848–870 (AYSASSNNTPRRRSLETETTPTS) and 995–1027 (TLEAKQVEPTAKTQTGEPKVRSRRAARAAFPDT). An Autotransporter domain is found at 1140-1394 (VDQAQSAVWT…NVGVKLGYRW (255 aa)).

It localises to the periplasm. The protein localises to the secreted. It is found in the cell surface. Its subcellular location is the cell outer membrane. Probable protease; promotes adherence and invasion by directly binding to a host cell structure. In Haemophilus influenzae, this protein is Adhesion and penetration protein autotransporter (hap).